The primary structure comprises 612 residues: Elongation factor 4 (612 aa).

The region spanning 12–194 (SRIRNFSIIA…QIVEKVPAPA (183 aa)) is the tr-type G domain. Residues 24–29 (DHGKST) and 141–144 (NKID) each bind GTP.

This sequence belongs to the TRAFAC class translation factor GTPase superfamily. Classic translation factor GTPase family. LepA subfamily.

It is found in the cell membrane. It catalyses the reaction GTP + H2O = GDP + phosphate + H(+). In terms of biological role, required for accurate and efficient protein synthesis under certain stress conditions. May act as a fidelity factor of the translation reaction, by catalyzing a one-codon backward translocation of tRNAs on improperly translocated ribosomes. Back-translocation proceeds from a post-translocation (POST) complex to a pre-translocation (PRE) complex, thus giving elongation factor G a second chance to translocate the tRNAs correctly. Binds to ribosomes in a GTP-dependent manner. The protein is Elongation factor 4 of Bacillus pumilus (strain SAFR-032).